The chain runs to 536 residues: Phosphoenolpyruvate carboxykinase (ATP) (536 aa).

Substrate contacts are provided by R61, Y195, and K201. Residues K201, H220, and 236 to 244 (GLSGTGKTT) each bind ATP. Positions 201 and 220 each coordinate Mn(2+). D257 is a Mn(2+) binding site. Residues E285, R323, and T448 each coordinate ATP. Position 323 (R323) interacts with substrate.

This sequence belongs to the phosphoenolpyruvate carboxykinase (ATP) family. Mn(2+) is required as a cofactor.

The protein resides in the cytoplasm. The catalysed reaction is oxaloacetate + ATP = phosphoenolpyruvate + ADP + CO2. The protein operates within carbohydrate biosynthesis; gluconeogenesis. In terms of biological role, involved in the gluconeogenesis. Catalyzes the conversion of oxaloacetate (OAA) to phosphoenolpyruvate (PEP) through direct phosphoryl transfer between the nucleoside triphosphate and OAA. This is Phosphoenolpyruvate carboxykinase (ATP) from Methylobacterium sp. (strain 4-46).